Here is a 333-residue protein sequence, read N- to C-terminus: Holliday junction branch migration complex subunit RuvB (333 aa).

The tract at residues Met1–Tyr182 is large ATPase domain (RuvB-L). Residues Leu21, Arg22, Gly63, Lys66, Thr67, Thr68, Glu129–Phe131, Arg172, Tyr182, and Arg219 contribute to the ATP site. A Mg(2+)-binding site is contributed by Thr67. Residues Thr183–Gln253 are small ATPAse domain (RuvB-S). Positions Lys256–Val333 are head domain (RuvB-H). Residues Arg311 and Arg316 each contribute to the DNA site.

It belongs to the RuvB family. Homohexamer. Forms an RuvA(8)-RuvB(12)-Holliday junction (HJ) complex. HJ DNA is sandwiched between 2 RuvA tetramers; dsDNA enters through RuvA and exits via RuvB. An RuvB hexamer assembles on each DNA strand where it exits the tetramer. Each RuvB hexamer is contacted by two RuvA subunits (via domain III) on 2 adjacent RuvB subunits; this complex drives branch migration. In the full resolvosome a probable DNA-RuvA(4)-RuvB(12)-RuvC(2) complex forms which resolves the HJ.

It localises to the cytoplasm. It carries out the reaction ATP + H2O = ADP + phosphate + H(+). In terms of biological role, the RuvA-RuvB-RuvC complex processes Holliday junction (HJ) DNA during genetic recombination and DNA repair, while the RuvA-RuvB complex plays an important role in the rescue of blocked DNA replication forks via replication fork reversal (RFR). RuvA specifically binds to HJ cruciform DNA, conferring on it an open structure. The RuvB hexamer acts as an ATP-dependent pump, pulling dsDNA into and through the RuvAB complex. RuvB forms 2 homohexamers on either side of HJ DNA bound by 1 or 2 RuvA tetramers; 4 subunits per hexamer contact DNA at a time. Coordinated motions by a converter formed by DNA-disengaged RuvB subunits stimulates ATP hydrolysis and nucleotide exchange. Immobilization of the converter enables RuvB to convert the ATP-contained energy into a lever motion, pulling 2 nucleotides of DNA out of the RuvA tetramer per ATP hydrolyzed, thus driving DNA branch migration. The RuvB motors rotate together with the DNA substrate, which together with the progressing nucleotide cycle form the mechanistic basis for DNA recombination by continuous HJ branch migration. Branch migration allows RuvC to scan DNA until it finds its consensus sequence, where it cleaves and resolves cruciform DNA. The polypeptide is Holliday junction branch migration complex subunit RuvB (Bacillus cereus (strain Q1)).